The primary structure comprises 252 residues: MLEIKSIPAFNDNYIWLIQNSDKRCAVVDPGDAQPVLDYLQANELTLEAILVTHHHNDHIGGVPDLVRAFPHVTVVGPKAEPIPTLTTPMEEGDKLELFGEIFLVLGLPGHTLGHIGYVGDSKLFCGDVLFSAGCGRIFEGTPEQMFESLSKIAALPEETQVFCAHEYTASNVAFALAVEPDNEQLRQYRDDVNRLRALNIPTLPTTLRKEKWINPFLRTTNPDVVKSVANRIKNSDPCSVFTALREWKNEF.

Residues H54, H56, D58, H59, H111, D128, and H166 each contribute to the Zn(2+) site.

It belongs to the metallo-beta-lactamase superfamily. Glyoxalase II family. As to quaternary structure, monomer. Requires Zn(2+) as cofactor.

It catalyses the reaction an S-(2-hydroxyacyl)glutathione + H2O = a 2-hydroxy carboxylate + glutathione + H(+). It participates in secondary metabolite metabolism; methylglyoxal degradation; (R)-lactate from methylglyoxal: step 2/2. Functionally, thiolesterase that catalyzes the hydrolysis of S-D-lactoyl-glutathione to form glutathione and D-lactic acid. The polypeptide is Hydroxyacylglutathione hydrolase (Vibrio parahaemolyticus serotype O3:K6 (strain RIMD 2210633)).